An 82-amino-acid polypeptide reads, in one-letter code: M-zodatoxin-Lt3a (82 aa).

Residues 1 to 22 (MKTYAVLLALVVAFVCIAESTG) form the signal peptide. Positions 23 to 61 (YPVEDLEDDELTELEAEALLEDLLEDLELEDLDYNEEAR) are excised as a propeptide. The short motif at 58–61 (EEAR) is the Processing quadruplet motif element. Alanine amide is present on Ala81.

Belongs to the cationic peptide 03 (latarcin) family. 03 subfamily. Post-translationally, cleavage of the propeptide depends on the processing quadruplet motif (XXXR, with at least one of X being E). Expressed by the venom gland.

It is found in the secreted. It localises to the target cell membrane. Functionally, it has antimicrobial activity against Gram-positive bacteria (A.globiformis VKM Ac-1112 (MIC=0.3 uM), and B.subtilis VKM B-501 (MIC=1.2 uM)), Gram-negative bacteria (E.coli DH5-alpha (MIC=2.5 uM), E.coli MH1 (MIC=6.0 uM), and P.aeruginosa PAO1 (MIC&gt;40 uM)), and yeasts (P.pastoris GS115 (MIC=20 uM), and S.cerevisiae Y190 (MIC=20 uM)). Causes paralysis, but is not lethal when injected into insect (M.domestica) larvae. A second study reports antibacterial activity against E.coli (MIC=100 uM) and S.aureus (MIC=84 uM). Furthermore, increases efficacy of antibiotics (chloramphenicol, streptomycin, kanamycin, novobiocin) when tested against E.coli, probably by facilitating their incorporation into the bacteria. This Lachesana tarabaevi (Spider) protein is M-zodatoxin-Lt3a.